The following is a 629-amino-acid chain: Acetylcholinesterase (629 aa).

A signal peptide spans 1-38; the sequence is MGQLSILCLFVTVCASVCGYSWPSDETTTKPSQFKDFH. Cysteines 103 and 130 form a disulfide. Residue asparagine 125 is glycosylated (N-linked (GlcNAc...) asparagine). The active-site Acyl-ester intermediate is serine 253. Residues cysteine 307 and cysteine 322 are joined by a disulfide bond. Residue asparagine 308 is glycosylated (N-linked (GlcNAc...) asparagine). The active-site Charge relay system is the glutamate 382. The N-linked (GlcNAc...) asparagine glycan is linked to asparagine 418. A disulfide bond links cysteine 458 and cysteine 574. The Charge relay system role is filled by histidine 496. The N-linked (GlcNAc...) asparagine glycan is linked to asparagine 509. Residue serine 605 is the site of GPI-anchor amidated serine attachment. Positions 606 to 629 are cleaved as a propeptide — removed in mature form; that stretch reads SSNELLPPSTSLVLIWIMTLLNAL.

Belongs to the type-B carboxylesterase/lipase family. In terms of assembly, homodimer; disulfide-linked. In terms of processing, the N-terminus is blocked.

It is found in the synapse. It localises to the cell membrane. The catalysed reaction is acetylcholine + H2O = choline + acetate + H(+). Its function is as follows. Rapidly hydrolyzes choline released into the synapse. In Leptinotarsa decemlineata (Colorado potato beetle), this protein is Acetylcholinesterase.